The primary structure comprises 136 residues: Riboflavin kinase (136 aa).

15–20 (GLGEGR) lines the CDP pocket. Mg(2+) is bound by residues Thr44 and Asn46. FMN-binding residues include Thr103 and Glu111. Position 116 to 119 (116 to 119 (YYLR)) interacts with CDP.

It belongs to the archaeal riboflavin kinase family. Requires Mg(2+) as cofactor.

The catalysed reaction is riboflavin + CTP = CDP + FMN + H(+). The protein operates within cofactor biosynthesis; FMN biosynthesis; FMN from riboflavin (CTP route): step 1/1. Catalyzes the CTP-dependent phosphorylation of riboflavin (vitamin B2) to form flavin mononucleotide (FMN). The chain is Riboflavin kinase from Sulfurisphaera tokodaii (strain DSM 16993 / JCM 10545 / NBRC 100140 / 7) (Sulfolobus tokodaii).